The chain runs to 307 residues: MSSRELIILGCSSQQPTRTRNQGAYLFRWNGEGLLFDPGEGTQRQFIFANIAPTTVNRIFVSHFHGDHCLGLGSMLMRLNLDKVSHPIHCYYPASGKKYFDRLRYGTIYHETIQVVEHPISEEGIVEDFGSFRIEAQRLQHQVDTLGWRITEPDTIKFLPKELESRGIRGLIIQDLIRDQEISIGGSTVYLSDVSYVRKGDSIAIIADTLPCQAAIDLAKNSCMMLCESTYLEQHRHLAESHFHMTAKQAATLAKRAATQKLILTHFSARYLNLDDFYKEASAVFPNVSVAQEYRSYPFPKNPLLNK.

Residues H63, H65, D67, H68, H141, D208, and H266 each coordinate Zn(2+). The active-site Proton acceptor is D67.

Belongs to the RNase Z family. Homodimer. It depends on Zn(2+) as a cofactor.

The enzyme catalyses Endonucleolytic cleavage of RNA, removing extra 3' nucleotides from tRNA precursor, generating 3' termini of tRNAs. A 3'-hydroxy group is left at the tRNA terminus and a 5'-phosphoryl group is left at the trailer molecule.. Its function is as follows. Zinc phosphodiesterase, which displays some tRNA 3'-processing endonuclease activity. Probably involved in tRNA maturation, by removing a 3'-trailer from precursor tRNA. The polypeptide is Ribonuclease Z (Chlamydia pneumoniae (Chlamydophila pneumoniae)).